The chain runs to 465 residues: MSVKSTVEQLSPTRVRINVEVPFEELKPDFDRAYKALAKQVRIPGFRPGKAPAKLLEARLGRGAILEQVVNDVLPARYSEAVTTSEVKVIGQPDIEITKIEDGQEFAFSAEVDVRPEIALPDYADLEVTVDAFTIGDEDIEEQLNSLRQRFGTLTGVERPVQEGDFVSIDLSATVDGQEVPEASTTGLSHEVGSGQLIEGLDEALIGLSAGESKEFTSTLVAGEHAGKEAVITVTVQSVKERELPEADDEFAQLASEFDTLEELKADLRSRVERVKKVQQAGEIRDKVLEALLEKTEVPLPEKVVQAEIDAVLHDAVHGFDHDEAKLAEALEAQGSSRAEFDKDTKEAAEKSVKTQLLLDAIAEAEGTQVGQEELTERILFQAQRYGMAPEQFIQQVQQAGQLGAVFADVRRGKALAGVVGKVKVTDSEGNTVDTAEMFGEPAAEPEQADAAQAGDAEKAAADSE.

One can recognise a PPIase FKBP-type domain in the interval 164 to 245 (GDFVSIDLSA…VQSVKERELP (82 aa)). The interval 430 to 465 (GNTVDTAEMFGEPAAEPEQADAAQAGDAEKAAADSE) is disordered. A compositionally biased stretch (low complexity) spans 440–455 (GEPAAEPEQADAAQAG). Basic and acidic residues predominate over residues 456 to 465 (DAEKAAADSE).

This sequence belongs to the FKBP-type PPIase family. Tig subfamily.

Its subcellular location is the cytoplasm. It carries out the reaction [protein]-peptidylproline (omega=180) = [protein]-peptidylproline (omega=0). Functionally, involved in protein export. Acts as a chaperone by maintaining the newly synthesized protein in an open conformation. Functions as a peptidyl-prolyl cis-trans isomerase. This chain is Trigger factor, found in Nocardia farcinica (strain IFM 10152).